Here is a 163-residue protein sequence, read N- to C-terminus: Nucleotide-binding protein BBR47_25280 (163 aa).

The protein belongs to the YajQ family.

Nucleotide-binding protein. In Brevibacillus brevis (strain 47 / JCM 6285 / NBRC 100599), this protein is Nucleotide-binding protein BBR47_25280.